The primary structure comprises 231 residues: E3 ubiquitin-protein ligase At3g02290 (231 aa).

Over residues 103 to 118 (GSSHSHEEVEPLRSDS) the composition is skewed to basic and acidic residues. The segment at 103–125 (GSSHSHEEVEPLRSDSDADSESF) is disordered. The segment at 181 to 222 (CPTCLEEYTSENPKIVTKCSHHFHLSCIYEWMERSENCPVCG) adopts an RING-type; atypical zinc-finger fold.

The protein localises to the cytoplasm. It carries out the reaction S-ubiquitinyl-[E2 ubiquitin-conjugating enzyme]-L-cysteine + [acceptor protein]-L-lysine = [E2 ubiquitin-conjugating enzyme]-L-cysteine + N(6)-ubiquitinyl-[acceptor protein]-L-lysine.. It participates in protein modification; protein ubiquitination. Functionally, mediates E2-dependent protein ubiquitination. The protein is E3 ubiquitin-protein ligase At3g02290 of Arabidopsis thaliana (Mouse-ear cress).